The following is a 113-amino-acid chain: Putative pterin-4-alpha-carbinolamine dehydratase (113 aa).

The protein belongs to the pterin-4-alpha-carbinolamine dehydratase family.

The enzyme catalyses (4aS,6R)-4a-hydroxy-L-erythro-5,6,7,8-tetrahydrobiopterin = (6R)-L-erythro-6,7-dihydrobiopterin + H2O. This chain is Putative pterin-4-alpha-carbinolamine dehydratase, found in Nitrosomonas eutropha (strain DSM 101675 / C91 / Nm57).